A 167-amino-acid polypeptide reads, in one-letter code: MNIQQGKVWKFGENIDTDLIIAARYLNTSDPQVLASHVMEDARPDFLQHFTKGDFIVAGENFGCGSSREHAPVALKTAGVSAVIAKSFARIFYRNSFNTGLPILEVKETDEIREGDTLEVDMAQGTIKNLTRNQTYAFKPIPPFMMELLESGGLIEHAKAKIAQGVL.

This sequence belongs to the LeuD family. LeuD type 2 subfamily. As to quaternary structure, heterodimer of LeuC and LeuD.

It carries out the reaction (2R,3S)-3-isopropylmalate = (2S)-2-isopropylmalate. It functions in the pathway amino-acid biosynthesis; L-leucine biosynthesis; L-leucine from 3-methyl-2-oxobutanoate: step 2/4. Functionally, catalyzes the isomerization between 2-isopropylmalate and 3-isopropylmalate, via the formation of 2-isopropylmaleate. The chain is 3-isopropylmalate dehydratase small subunit from Wolinella succinogenes (strain ATCC 29543 / DSM 1740 / CCUG 13145 / JCM 31913 / LMG 7466 / NCTC 11488 / FDC 602W) (Vibrio succinogenes).